We begin with the raw amino-acid sequence, 189 residues long: Ornithine decarboxylase antizyme 2 (189 aa).

S186 carries the post-translational modification Phosphoserine.

This sequence belongs to the ODC antizyme family. As to quaternary structure, interacts with ODC1 and thereby sterically blocks ODC homodimerization. Interacts with AZIN2; this interaction disrupts the interaction between the antizyme and ODC1.

It localises to the nucleus. In terms of biological role, ornithine decarboxylase (ODC) antizyme protein that negatively regulates ODC activity and intracellular polyamine biosynthesis and uptake in response to increased intracellular polyamine levels. Binds to ODC monomers, inhibiting the assembly of the functional ODC homodimers. Does not target the ODC monomers for degradation, which allows a protein synthesis-independent restoration of ODC activity. Involved in the translocation of AZIN2 from ER-Golgi intermediate compartment (ERGIC) to the cytosol. The sequence is that of Ornithine decarboxylase antizyme 2 (OAZ2) from Homo sapiens (Human).